We begin with the raw amino-acid sequence, 148 residues long: Ribonuclease 4 (148 aa).

Positions 1 to 29 (MMDLQRTQSLLLLLVLTLLGLGLVQPSYG) are cleaved as a signal peptide. Gln-30 is modified (pyrrolidone carboxylic acid). DUMP contacts are provided by Arg-36, His-41, Lys-69, Asn-72, and Thr-73. His-41 serves as the catalytic Proton acceptor. 4 disulfides stabilise this stretch: Cys-54–Cys-110, Cys-68–Cys-121, Cys-86–Cys-136, and Cys-93–Cys-100. The active-site Proton donor is His-145. Phe-146 serves as a coordination point for dUMP.

It belongs to the pancreatic ribonuclease family. In terms of tissue distribution, expressed in the cortical tubules of the kidney (at protein level). Also expressed in the medullary tubules of the kidney.

It localises to the secreted. Functionally, cleaves preferentially after uridine bases. Has antimicrobial activity against uropathogenic E.coli (UPEC). Probably contributes to urinary tract sterility. This chain is Ribonuclease 4 (Rnase4), found in Mus musculus (Mouse).